We begin with the raw amino-acid sequence, 247 residues long: Adenosylcobinamide-GDP ribazoletransferase (247 aa).

Transmembrane regions (helical) follow at residues 34-54 (IVMF…IFIL), 59-79 (CGIP…TGGF), 113-133 (GGLA…ELAL), 138-158 (MLAA…LLMY), and 194-214 (VLLL…AIFI).

It belongs to the CobS family. Mg(2+) serves as cofactor.

It localises to the cell inner membrane. The enzyme catalyses alpha-ribazole + adenosylcob(III)inamide-GDP = adenosylcob(III)alamin + GMP + H(+). It catalyses the reaction alpha-ribazole 5'-phosphate + adenosylcob(III)inamide-GDP = adenosylcob(III)alamin 5'-phosphate + GMP + H(+). It functions in the pathway cofactor biosynthesis; adenosylcobalamin biosynthesis; adenosylcobalamin from cob(II)yrinate a,c-diamide: step 7/7. Joins adenosylcobinamide-GDP and alpha-ribazole to generate adenosylcobalamin (Ado-cobalamin). Also synthesizes adenosylcobalamin 5'-phosphate from adenosylcobinamide-GDP and alpha-ribazole 5'-phosphate. The chain is Adenosylcobinamide-GDP ribazoletransferase from Salmonella typhi.